A 408-amino-acid chain; its full sequence is Peptidase T (408 aa).

Position 81 (His-81) interacts with Zn(2+). The active site involves Asp-83. Asp-142 contacts Zn(2+). Residue Glu-176 is the Proton acceptor of the active site. Positions 177, 199, and 381 each coordinate Zn(2+).

The protein belongs to the peptidase M20B family. Zn(2+) serves as cofactor.

It localises to the cytoplasm. The catalysed reaction is Release of the N-terminal residue from a tripeptide.. Functionally, cleaves the N-terminal amino acid of tripeptides. This chain is Peptidase T, found in Streptococcus gordonii (strain Challis / ATCC 35105 / BCRC 15272 / CH1 / DL1 / V288).